The sequence spans 398 residues: Nucleotide-sugar uncharacterized transporter 2 (398 aa).

The next 10 helical transmembrane spans lie at 54 to 74 (FCGP…IILA), 84 to 104 (FNFP…LLAF), 119 to 139 (TTPF…SGLA), 150 to 170 (FYQM…FVLF), 179 to 199 (VMAL…DLEF), 201 to 221 (LFGA…KILW), 242 to 262 (FTVF…VLLF), 271 to 291 (AILI…LALG), 299 to 319 (VVLG…IFGS), and 322 to 342 (GFIS…YTWL).

Belongs to the TPT transporter family. TPT (TC 2.A.7.9) subfamily.

It is found in the membrane. This chain is Nucleotide-sugar uncharacterized transporter 2, found in Arabidopsis thaliana (Mouse-ear cress).